The primary structure comprises 316 residues: DNA-directed RNA polymerase III subunit RPC6 (316 aa).

Ala2 is modified (N-acetylalanine). Residues Lys5 and Lys7 each participate in a glycyl lysine isopeptide (Lys-Gly) (interchain with G-Cter in SUMO2) cross-link. Cys287, Cys290, Cys296, and Cys307 together coordinate [4Fe-4S] cluster.

This sequence belongs to the eukaryotic RPC34/RPC39 RNA polymerase subunit family. Component of the RNA polymerase III complex consisting of 17 subunits: a ten-subunit horseshoe-shaped catalytic core composed of POLR3A/RPC1, POLR3B/RPC2, POLR1C/RPAC1, POLR1D/RPAC2, POLR3K/RPC10, POLR2E/RPABC1, POLR2F/RPABC2, POLR2H/RPABC3, POLR2K/RPABC4 and POLR2L/RPABC5; a mobile stalk composed of two subunits POLR3H/RPC8 and CRCP/RPC9, protruding from the core and functioning primarily in transcription initiation; and additional subunits homologous to general transcription factors of the RNA polymerase II machinery, POLR3C/RPC3-POLR3F/RPC6-POLR3G/RPC7 heterotrimer required for transcription initiation and POLR3D/RPC4-POLR3E/RPC5 heterodimer involved in both transcription initiation and termination. Directly interacts with POLR3C. Interacts with TBP and TFIIIB90 and GTF3C4. Interacts with MAF1. As part of the RNA polymerase III complex, interacts with PKP2.

The protein localises to the nucleus. Functionally, DNA-dependent RNA polymerase catalyzes the transcription of DNA into RNA using the four ribonucleoside triphosphates as substrates. Specific peripheric component of RNA polymerase III (Pol III) which synthesizes small non-coding RNAs including 5S rRNA, snRNAs, tRNAs and miRNAs from at least 500 distinct genomic loci. Part of POLR3C/RPC3-POLR3F/RPC6-POLR3G/RPC7 heterotrimer that coordinates the dynamics of Pol III stalk and clamp modules during the transition from apo to elongation state. Pol III plays a key role in sensing and limiting infection by intracellular bacteria and DNA viruses, including varicella zoster virus. Acts as a nuclear and cytosolic DNA sensor detecting AT-rich DNA, involved in innate immune response. Can sense non-self dsDNA that serves as template for transcription into dsRNA. The non-self RNA polymerase III transcripts, such as Epstein-Barr virus-encoded RNAs (EBERs) induce type I interferon and NF-kappa-B through the RIG-I pathway. Preferentially binds double-stranded DNA (dsDNA). The sequence is that of DNA-directed RNA polymerase III subunit RPC6 from Homo sapiens (Human).